The primary structure comprises 265 residues: Early E4 31 kDa protein (265 aa).

It belongs to the adenoviridae E4 30 to 34 kDa protein family. As to quaternary structure, interacts with E1B-55k.

It is found in the host nucleus. The protein resides in the host cytoplasm. Its function is as follows. Plays a major role to prevent cellular inhibition of viral genome replication by nuclear bodies. Assembles an SCF-like E3 ubiquitin ligase complex based on the cellular proteins ELOB, ELOC, CUL5 and RBX1, in cooperation with viral E1B-55K. This viral RING-type ligase ubiquitinates cellular substrates prior to proteasomal degradation: p53/TP53, LIG4, MRE11-RAD50-NBS1 (MRN) complex, ITGA3, DAXX and BLM. The sequence is that of Early E4 31 kDa protein from Canis lupus familiaris (Dog).